Consider the following 77-residue polypeptide: Small ribosomal subunit protein bS20 (77 aa).

This sequence belongs to the bacterial ribosomal protein bS20 family.

Binds directly to 16S ribosomal RNA. The sequence is that of Small ribosomal subunit protein bS20 from Lactococcus lactis subsp. lactis (strain IL1403) (Streptococcus lactis).